Here is a 363-residue protein sequence, read N- to C-terminus: 3-methyl-D-ornithine--L-lysine ligase (363 aa).

Lysine 10 serves as a coordination point for ATP. 11–12 (LQ) provides a ligand contact to L-lysine. ATP contacts are provided by residues aspartate 31, 49–50 (DV), and 72–73 (EN). Glutamate 72 serves as a coordination point for L-lysine. ADP contacts are provided by residues lysine 104, lysine 131, serine 138, and 160-163 (EEYV). D-ornithine-binding positions include 169 to 171 (SLE) and aspartate 225. Residues glutamate 227, glutamate 239, and aspartate 241 each contribute to the Mg(2+) site. An ADP-binding site is contributed by glutamate 239. D-ornithine-binding positions include 243 to 248 (RFPSQT) and glutamate 302. Serine 246 and glutamate 302 together coordinate L-lysine.

This sequence belongs to the PylC family. The cofactor is Mg(2+).

The catalysed reaction is (3R)-3-methyl-D-ornithine + L-lysine + ATP = (3R)-3-methyl-D-ornithyl-N(6)-L-lysine + ADP + phosphate + H(+). The protein operates within amino-acid biosynthesis; L-pyrrolysine biosynthesis. Its function is as follows. Is required for the biosynthesis of pyrrolysine. Catalyzes the ATP-dependent ligation between (3R)-3-methyl-D-ornithine and L-lysine, leading to (3R)-3-methyl-D-ornithyl-N6-L-lysine. This Methanosarcina barkeri (strain Fusaro / DSM 804) protein is 3-methyl-D-ornithine--L-lysine ligase.